Consider the following 1189-residue polypeptide: Tyrosine-protein phosphatase non-receptor type 14 (1189 aa).

The 286-residue stretch at 21 to 306 folds into the FERM domain; the sequence is FVTRIRLLDS…TRHKFYKQNK (286 aa). Phosphoserine is present on residues Ser314, Ser461, Ser486, Ser591, Ser593, Ser594, and Ser646. The segment at 744–775 is disordered; sequence ARIPNRPPPEYPGPRKSVSNGALRQDQGTPLP. Positions 760–771 are enriched in polar residues; it reads SVSNGALRQDQG. The residue at position 833 (Ser833) is a Phosphoserine. A Tyrosine-protein phosphatase domain is found at 911-1182; sequence VFTEYEQIPN…KFVYQVLVQF (272 aa). Cys1123 serves as the catalytic Phosphocysteine intermediate. Residues 1123 to 1129 and Gln1167 contribute to the substrate site; that span reads CSAGVGR.

Belongs to the protein-tyrosine phosphatase family. Non-receptor class subfamily. As to quaternary structure, interacts with FLT4; the interaction is enhanced by stimulation with VEGFC. Interacts (via PPxY motifs) with YAP1 (via WW domains); this interaction leads to the cytoplasmic sequestration of YAP1 and inhibits its transcriptional coactivator activity. In terms of processing, ubiquitinated by the ECS (Elongin BC-CUL2/5-SOCS-box protein)/LRR1 E3 ligase complex and subsequently targeted to proteasomal degradation. Thymus; in cells of both hematopoietic and non-hematopoietic origins.

It is found in the cytoplasm. The protein localises to the cytoskeleton. The protein resides in the nucleus. It catalyses the reaction O-phospho-L-tyrosyl-[protein] + H2O = L-tyrosyl-[protein] + phosphate. Protein tyrosine phosphatase which may play a role in the regulation of lymphangiogenesis, cell-cell adhesion, cell-matrix adhesion, cell migration, cell growth and also regulates TGF-beta gene expression, thereby modulating epithelial-mesenchymal transition. Mediates beta-catenin dephosphorylation at adhesion junctions. Acts as a negative regulator of the oncogenic property of YAP, a downstream target of the hippo pathway, in a cell density-dependent manner. May function as a tumor suppressor. This chain is Tyrosine-protein phosphatase non-receptor type 14 (Ptpn14), found in Mus musculus (Mouse).